The following is a 1357-amino-acid chain: DNA-directed RNA polymerase subunit beta (1357 aa).

This sequence belongs to the RNA polymerase beta chain family. In terms of assembly, the RNAP catalytic core consists of 2 alpha, 1 beta, 1 beta' and 1 omega subunit. When a sigma factor is associated with the core the holoenzyme is formed, which can initiate transcription.

The enzyme catalyses RNA(n) + a ribonucleoside 5'-triphosphate = RNA(n+1) + diphosphate. DNA-dependent RNA polymerase catalyzes the transcription of DNA into RNA using the four ribonucleoside triphosphates as substrates. This Pseudomonas syringae pv. tomato (strain ATCC BAA-871 / DC3000) protein is DNA-directed RNA polymerase subunit beta.